The sequence spans 482 residues: Bile acid receptor (482 aa).

A Glycyl lysine isopeptide (Lys-Gly) (interchain with G-Cter in SUMO1) cross-link involves residue K132. The nuclear receptor DNA-binding region spans 134–209; that stretch reads DELCVVCGDR…MGMLAECLLT (76 aa). Residues 137–157 form an NR C4-type zinc finger; the sequence is CVVCGDRASGYHYNALTCEGC. 2 positions are modified to phosphoserine; by PKC/PRKCA: S145 and S164. K167 carries the N6-acetyllysine; by EP300 modification. The NR C4-type zinc-finger motif lies at 173–197; sequence CKNGGNCVMDMYMRRKCQECRLRKC. Position 216 is an N6-methyllysine; by SETD7 (K216). N6-acetyllysine; by EP300 is present on K223. The span at 229-240 shows a compositional bias: basic and acidic residues; it reads AIHEDSEGRDLR. The segment at 229–253 is disordered; it reads AIHEDSEGRDLRQVTSTTKSCREKT. Residues 258-482 enclose the NR LBD domain; sequence DQQNLLHYIM…PLLCEIWDVQ (225 aa). A Glycyl lysine isopeptide (Lys-Gly) (interchain with G-Cter in SUMO1) cross-link involves residue K285. Residues R341, Y371, and Y379 each coordinate chenodeoxycholate. T452 carries the post-translational modification Phosphothreonine; by PKC/PRKCZ. H457 is a chenodeoxycholate binding site.

The protein belongs to the nuclear hormone receptor family. NR1 subfamily. In terms of assembly, heterodimer with RXRA; the heterodimerization enhances the binding affinity for LXXLL motifs from coactivators. Binds DNA predominantly as a heterodimer with RXRA. After activation by agonist binding interacts with coactivators. Interacts with NCOA1, NCOA2, PPARGC1A, CARM1, SETD7, PRMT1, GPS2, SMARCA4 and MED1, EP300 and SMARCD1. Interacts with XRCC5 and XRCC6; decreasing NR1H4/FXR transactivation activity towards ABCB11/BSEP. Interacts with PAGR1 AND NCOA6; indicative for an association with an MLL2/MLL3 complex (ASCOM). Acetylated by EP300. Lys-223 as is the major acetylation site for EP300; the dynamicly regulated acetylation inhibits heterodimerization with RXRA and transactivation activity. Deacetylated by SIRT1. Post-translationally, methylation may increase transactivation of target genes. In terms of processing, phosphorylation by PKC/PRKCA increases transactivation activity by promoting association with PPARGC1A. Sumoylated upon ligand binding.

It localises to the nucleus. Its function is as follows. Ligand-activated transcription factor. Receptor for bile acids (BAs) such as chenodeoxycholic acid (CDCA), lithocholic acid, deoxycholic acid (DCA) and allocholic acid (ACA). Plays a essential role in BA homeostasis through the regulation of genes involved in BA synthesis, conjugation and enterohepatic circulation. Also regulates lipid and glucose homeostasis and is involved innate immune response. The FXR-RXR heterodimer binds predominantly to farnesoid X receptor response elements (FXREs) containing two inverted repeats of the consensus sequence 5'-AGGTCA-3' in which the monomers are spaced by 1 nucleotide (IR-1) but also to tandem repeat DR1 sites with lower affinity, and can be activated by either FXR or RXR-specific ligands. It is proposed that monomeric nuclear receptors such as NR5A2/LRH-1 bound to coregulatory nuclear responsive element (NRE) halfsites located in close proximity to FXREs modulate transcriptional activity. In the liver activates transcription of the corepressor NR0B2 thereby indirectly inhibiting CYP7A1 and CYP8B1 (involved in BA synthesis) implicating at least in part histone demethylase KDM1A resulting in epigenomic repression, and SLC10A1/NTCP (involved in hepatic uptake of conjugated BAs). Activates transcription of the repressor MAFG (involved in regulation of BA synthesis). Activates transcription of SLC27A5/BACS and BAAT (involved in BA conjugation), ABCB11/BSEP (involved in bile salt export) by directly recruiting histone methyltransferase CARM1, and ABCC2/MRP2 (involved in secretion of conjugated BAs) and ABCB4 (involved in secretion of phosphatidylcholine in the small intestine). Activates transcription of SLC27A5/BACS and BAAT (involved in BA conjugation), ABCB11/BSEP (involved in bile salt export) by directly recruiting histone methyltransferase CARM1, and ABCC2/MRP2 (involved in secretion of conjugated BAs) and ABCB4 (involved in secretion of phosphatidylcholine in the small intestine). In the intestine activates FGF19 expression and secretion leading to hepatic CYP7A1 repression. The function also involves the coordinated induction of hepatic KLB/beta-klotho expression. Regulates transcription of liver UGT2B4 and SULT2A1 involved in BA detoxification; binding to the UGT2B4 promoter seems to imply a monomeric transactivation independent of RXRA. Modulates lipid homeostasis by activating liver NR0B2/SHP-mediated repression of SREBF1 (involved in de novo lipogenesis), expression of PLTP (involved in HDL formation), SCARB1 (involved in HDL hepatic uptake), APOE, APOC1, APOC4, PPARA (involved in beta-oxidation of fatty acids), VLDLR and SDC1 (involved in the hepatic uptake of LDL and IDL remnants), and inhibiting expression of MTTP (involved in VLDL assembly). Increases expression of APOC2 (promoting lipoprotein lipase activity implicated in triglyceride clearance). Transrepresses APOA1 involving a monomeric competition with NR2A1 for binding to a DR1 element. Also reduces triglyceride clearance by inhibiting expression of ANGPTL3 and APOC3 (both involved in inhibition of lipoprotein lipase). Involved in glucose homeostasis by modulating hepatic gluconeogenesis through activation of NR0B2/SHP-mediated repression of respective genes. Modulates glycogen synthesis (inducing phosphorylation of glycogen synthase kinase-3). Modulates glucose-stimulated insulin secretion and is involved in insulin resistance. Involved in intestinal innate immunity. Plays a role in protecting the distal small intestine against bacterial overgrowth and preservation of the epithelial barrier. Down-regulates inflammatory cytokine expression in several types of immune cells including macrophages and mononuclear cells. Mediates trans-repression of TLR4-induced cytokine expression; the function seems to require its sumoylation and prevents N-CoR nuclear receptor corepressor clearance from target genes such as IL1B and NOS2. Involved in the TLR9-mediated protective mechanism in intestinal inflammation. Plays an anti-inflammatory role in liver inflammation; proposed to inhibit pro-inflammatory (but not antiapoptotic) NF-kappa-B signaling. The chain is Bile acid receptor (NR1H4) from Bos taurus (Bovine).